A 404-amino-acid chain; its full sequence is Cysteine desulfurase IscS (404 aa).

Pyridoxal 5'-phosphate is bound by residues 75–76 (AT), N155, Q183, and 203–205 (SGH). An N6-(pyridoxal phosphate)lysine modification is found at K206. T243 provides a ligand contact to pyridoxal 5'-phosphate. C328 functions as the Cysteine persulfide intermediate in the catalytic mechanism. Position 328 (C328) interacts with [2Fe-2S] cluster.

The protein belongs to the class-V pyridoxal-phosphate-dependent aminotransferase family. NifS/IscS subfamily. In terms of assembly, homodimer. Forms a heterotetramer with IscU, interacts with other sulfur acceptors. Pyridoxal 5'-phosphate serves as cofactor.

Its subcellular location is the cytoplasm. It carries out the reaction (sulfur carrier)-H + L-cysteine = (sulfur carrier)-SH + L-alanine. Its pathway is cofactor biosynthesis; iron-sulfur cluster biosynthesis. In terms of biological role, master enzyme that delivers sulfur to a number of partners involved in Fe-S cluster assembly, tRNA modification or cofactor biosynthesis. Catalyzes the removal of elemental sulfur atoms from cysteine to produce alanine. Functions as a sulfur delivery protein for Fe-S cluster synthesis onto IscU, an Fe-S scaffold assembly protein, as well as other S acceptor proteins. In Klebsiella pneumoniae subsp. pneumoniae (strain ATCC 700721 / MGH 78578), this protein is Cysteine desulfurase IscS.